The chain runs to 1302 residues: MRILRGSPALSEFRVNKLLELCREQDLPVTGIYAEFMHFADLKSDLDDQELEKLEKLLTYGPTIEEHEPEGLLLLVTPRPGTISPWSSKSTDIAINCGLDTVKRLERGTAYYVESSVVLSEAQVDAVKALIHDRMMETVFTELEAASALFTVAEPKPVAHVDILAGGRLALEEANVSLGLALAEDEIDYLVENFTKLGRNPNDIELMMFAQANSEHCRHKIFNADWTIDGVDQEKSLFKMIKNTFETTPDHVLSAYKDNAAVMTGSKVGRFFPDPKSRQYTYHHEDAHILMKVETHNHPTAISPWPGASTGSGGEIRDEGATGIGGKPKAGLVGFTTSNLRIPGFEQPWETDFGKPGRIVNALDIMLEGPLGGAAFNNEFGRPNLLGYFRTYEEKVTSHAGEEVRGYHKPIMIAGGMGNIRDEHVQKKEIPVGASLIVLGGPAMNIGLGGGAASSMASGQSAEDLDFASVQRENPEMERRCQEVIDRCWQLGEENPIAFIHDVGAGGISNALPELCDDGERGGKFQLRDVPNDELSMSPLEIWCNESQERYVLAVAPENMEAFDAICKRERAPYAVVGVATEERHLTLEDSHFDNTPIDMPMDILLGKTPKMHREATTLKVDSPAIARDGIEIDEAADRVLRLPTVAEKTFLITIGDRSVTGLVARDQMVGPWQVPVANCAVTAASYDTYHGEAMSMGERTPVALLDFGASARLAVGESLTNIAATDIGDIKRIKLSANWMSPAGHPGEDAGLYEAVKAVGEELCPALGLTIPVGKDSMSMKTKWEENGESKEVTSPLSLVITAFGRVEDVRKTVTPQLRTSDTLEGLGDTSLVLVDLGNGKNRLGATALAQVYKQLGDKPADVDNAEQLKGFFDAMQNLVRNDKLLAYHDKGDGGLFVTLAEMAFAGHCGVKADIAELGEDALAVLFNEELGAVVQVKNDDLDSVLSTLAANGLEACSHVIGSVEASDDFVFTSGDDVVLKRSRTELRVIWAETTHKMQALRDNPACADQEFEAKKDNTDPGLNVSLSFDVNEDIAAPYIAKGAKPKMAILREQGVNSHVEMAAAFDRAGFEATDIHMSDILTGQAVLDEYQGLVACGGFSYGDVLGAGEGWAKSILFNAQAREQFQAFFNREETFSLGVCNGCQMLSNLKELIPGADLWPRFVRNESERFEARFSLVEVQKSDSVFFDGMAGSRMPIAVSHGEGRVEVRDGEHLNAIEASGTVALRYVDNNGNPTQQYPNNPNGSPNAITGLTTADGRVTIMMPHPERVFRTVANSWAPEGWGENGAWMRMFQNARKNIG.

ATP-binding positions include 307–318 (GASTGSGGEIRD) and alanine 678. The Mg(2+) site is built by glutamate 718, asparagine 722, and aspartate 891. A Glutamine amidotransferase type-1 domain is found at 1049-1302 (MAILREQGVN…MFQNARKNIG (254 aa)). Cysteine 1142 acts as the Nucleophile in catalysis. Catalysis depends on residues histidine 1267 and glutamate 1269.

In the N-terminal section; belongs to the FGAMS family. Monomer.

It is found in the cytoplasm. It catalyses the reaction N(2)-formyl-N(1)-(5-phospho-beta-D-ribosyl)glycinamide + L-glutamine + ATP + H2O = 2-formamido-N(1)-(5-O-phospho-beta-D-ribosyl)acetamidine + L-glutamate + ADP + phosphate + H(+). It participates in purine metabolism; IMP biosynthesis via de novo pathway; 5-amino-1-(5-phospho-D-ribosyl)imidazole from N(2)-formyl-N(1)-(5-phospho-D-ribosyl)glycinamide: step 1/2. Functionally, phosphoribosylformylglycinamidine synthase involved in the purines biosynthetic pathway. Catalyzes the ATP-dependent conversion of formylglycinamide ribonucleotide (FGAR) and glutamine to yield formylglycinamidine ribonucleotide (FGAM) and glutamate. The polypeptide is Phosphoribosylformylglycinamidine synthase (Vibrio parahaemolyticus serotype O3:K6 (strain RIMD 2210633)).